Here is a 204-residue protein sequence, read N- to C-terminus: UPF0637 protein SA0957 (204 aa).

It belongs to the UPF0637 family.

The protein is UPF0637 protein SA0957 of Staphylococcus aureus (strain N315).